We begin with the raw amino-acid sequence, 384 residues long: Probable inactive patatin-like protein 9 (384 aa).

The PNPLA domain occupies 33 to 234 (LSIDGGGTTG…VMNNPTAAAV (202 aa)). The short motif at 37 to 42 (GGGTTG) is the GXGXXG element. Asp-221 acts as the Proton acceptor in catalysis. The DGA/G signature appears at 221–223 (DGG). Residues 363 to 384 (GKSSLPPSPCKESAVNPLADGR) are disordered.

It belongs to the patatin family. In terms of tissue distribution, highly expressed in roots and at lower levels in flowers and siliques.

This chain is Probable inactive patatin-like protein 9 (PLP9), found in Arabidopsis thaliana (Mouse-ear cress).